The following is a 275-amino-acid chain: MRNTVSTFQELKNKGEKITMLTAYDYSMAKLIDSSGINGILVGDSLGMVCLGYENTLSVTMEDMLHHTKAVVRGTSNALVVGDMPFMSYQTSIYDAVYNAGRFIKEAGAHAVKLEGGATVAEEIKAIVKAQIPVMGHIGLTPQSVNMFGGFKVQGKNEKVAKKLIEDAKILEEAGAFSIVLECIPEKLSKIISESISIPTIGIGAGKYCDGQILVYQDMLSMFSDFKPKFVKSFGNIGESIKDGVSQYIKEVKEAKFPEEKHAFKIDDDVINKLY.

Positions 44 and 83 each coordinate Mg(2+). 3-methyl-2-oxobutanoate is bound by residues 44–45 (DS), Asp-83, and Lys-113. Glu-115 contacts Mg(2+). The active-site Proton acceptor is the Glu-182.

It belongs to the PanB family. In terms of assembly, homodecamer; pentamer of dimers. It depends on Mg(2+) as a cofactor.

Its subcellular location is the cytoplasm. It carries out the reaction 3-methyl-2-oxobutanoate + (6R)-5,10-methylene-5,6,7,8-tetrahydrofolate + H2O = 2-dehydropantoate + (6S)-5,6,7,8-tetrahydrofolate. It participates in cofactor biosynthesis; (R)-pantothenate biosynthesis; (R)-pantoate from 3-methyl-2-oxobutanoate: step 1/2. Its function is as follows. Catalyzes the reversible reaction in which hydroxymethyl group from 5,10-methylenetetrahydrofolate is transferred onto alpha-ketoisovalerate to form ketopantoate. The chain is 3-methyl-2-oxobutanoate hydroxymethyltransferase from Clostridium botulinum (strain Kyoto / Type A2).